A 1023-amino-acid chain; its full sequence is GATOR2 complex protein WDR24 (1023 aa).

WD repeat units follow at residues N16–T54, S64–V108, D114–K154, P159–E199, S203–N243, S245–F287, and D291–Q329. Over residues S563–N578 the composition is skewed to low complexity. Disordered regions lie at residues S563–S621 and Q661–N824. The span at K584–N593 shows a compositional bias: acidic residues. Residues Q661–Q681 are compositionally biased toward polar residues. The span at N682–D695 shows a compositional bias: low complexity. A compositionally biased stretch (basic and acidic residues) spans N696–N742. Residues N743–E759 are compositionally biased toward acidic residues. Residues I760–N812 are compositionally biased toward low complexity. Residues A947–S969 form a C4-type zinc finger. Residues C948, C951, C962, C965, C972, C975, C986, C989, H991, H994, H997, C1010, C1014, H1016, and C1018 each coordinate Zn(2+). Residues S970–F1021 form an RING-type; atypical zinc finger.

Belongs to the WD repeat WDR24 family. As to quaternary structure, probably part of the GATOR complex.

It localises to the lysosome membrane. It catalyses the reaction S-ubiquitinyl-[E2 ubiquitin-conjugating enzyme]-L-cysteine + [acceptor protein]-L-lysine = [E2 ubiquitin-conjugating enzyme]-L-cysteine + N(6)-ubiquitinyl-[acceptor protein]-L-lysine.. It functions in the pathway protein modification; protein ubiquitination. Functionally, as a component of the GATOR complex may function in the amino acid-sensing branch of the TORC1 signaling pathway. The sequence is that of GATOR2 complex protein WDR24 from Dictyostelium discoideum (Social amoeba).